The primary structure comprises 729 residues: Catalase-peroxidase (729 aa).

Positions 95-217 form a cross-link, tryptophyl-tyrosyl-methioninium (Trp-Tyr) (with M-243); the sequence is WHSAGTYRIT…LAAVQMGLIY (123 aa). His-96 functions as the Proton acceptor in the catalytic mechanism. The segment at residues 217 to 243 is a cross-link (tryptophyl-tyrosyl-methioninium (Tyr-Met) (with W-95)); the sequence is YVNPEGPNGKPDPIAAATDIRETFFRM. Position 258 (His-258) interacts with heme b.

This sequence belongs to the peroxidase family. Peroxidase/catalase subfamily. As to quaternary structure, homodimer or homotetramer. The cofactor is heme b. Formation of the three residue Trp-Tyr-Met cross-link is important for the catalase, but not the peroxidase activity of the enzyme.

It carries out the reaction H2O2 + AH2 = A + 2 H2O. The catalysed reaction is 2 H2O2 = O2 + 2 H2O. Functionally, bifunctional enzyme with both catalase and broad-spectrum peroxidase activity. This Nitrobacter hamburgensis (strain DSM 10229 / NCIMB 13809 / X14) protein is Catalase-peroxidase.